A 159-amino-acid polypeptide reads, in one-letter code: Transcriptional repressor NrdR (159 aa).

Residues 1–11 (MQCPSCQNTDS) show a composition bias toward polar residues. Residues 1–20 (MQCPSCQNTDSRVLESRSAD) are disordered. Residues 3–34 (CPSCQNTDSRVLESRSADSGRSVRRRRECLNC) fold into a zinc finger. In terms of domain architecture, ATP-cone spans 49-139 (INVLKRSGAK…VYRQFNGIND (91 aa)).

It belongs to the NrdR family. The cofactor is Zn(2+).

Negatively regulates transcription of bacterial ribonucleotide reductase nrd genes and operons by binding to NrdR-boxes. The chain is Transcriptional repressor NrdR from Prochlorococcus marinus (strain NATL1A).